The following is a 472-amino-acid chain: MKSELIFLPVPAFGHLVGMVEMAKLFISRHENLSVTVLISKFFIDTGIDNYNKSLLAKPTPRLTIINLPEIDPQKYLLKPRCAIFPSLIENQKTHVRDVMSRMTQSESTRVVGLLADILFVDIFDIADEFNVPTYVYSPAGAGFLGLAFHLQTLNDDKKQDVTEFRNSDTELLVPSFANPVPAEFLPSIFLEKDGRHDVLLSLYWRCREAKGIIVNTFEELEPYAINSLRMDSMIPPIYPVGPILNLNGEGQNSDEAAVILGWLDDQPPSSVVFLCFGSFGSFPENQVKEIAMGLERSGHRFLWSLRPCISEGETTLQLKYSNLELPAGFLDRTSCVGKVIGWAPQMAILAHEAVGGFVSHCGWNSVLESVWYGMPVATWPMYGEQQLNAFEMVKELGLAVEIEVDYRNEYNKSDFIVKADEIETKIKKLMMDGKNSKIRKKVKEMKEKSRVAMSENGSSYTSLAKLFEEIM.

H15 acts as the Proton acceptor in catalysis. H15 is an an anthocyanidin binding site. The Charge relay role is filled by D117. The UDP-alpha-D-glucose site is built by A344, Q346, H361, W364, N365, S366, and E369. G384 is an an anthocyanidin binding site. 2 residues coordinate UDP-alpha-D-glucose: E385 and Q386.

This sequence belongs to the UDP-glycosyltransferase family.

It carries out the reaction (20S)-protopanaxadiol + UDP-alpha-D-glucose = (20S)-ginsenoside C-K + UDP + H(+). The enzyme catalyses (20S)-protopanaxatriol + UDP-alpha-D-glucose = (20S)-ginsenoside Rh1 + UDP + H(+). It catalyses the reaction (20S)-ginsenoside F1 + UDP-alpha-D-glucose = (20S)-ginsenoside Rg1 + UDP + H(+). It functions in the pathway secondary metabolite biosynthesis; terpenoid biosynthesis. Functionally, component of the dammarane-type triterpene saponins (e.g. PPT-type ginsenosides or panaxosides) biosynthetic pathway. Glycosyltransferase that catalyzes the biosynthesis of ginsenoside Rh1 from protopanaxatriol (PPT) and the conversion of ginsenoside F1 to ginsenoside Rg1. This chain is UDP-glycosyltransferase 100, found in Panax ginseng (Korean ginseng).